The sequence spans 313 residues: Methionyl-tRNA formyltransferase (313 aa).

(6S)-5,6,7,8-tetrahydrofolate is bound at residue 112–115 (SLLP).

The protein belongs to the Fmt family.

It carries out the reaction L-methionyl-tRNA(fMet) + (6R)-10-formyltetrahydrofolate = N-formyl-L-methionyl-tRNA(fMet) + (6S)-5,6,7,8-tetrahydrofolate + H(+). Functionally, attaches a formyl group to the free amino group of methionyl-tRNA(fMet). The formyl group appears to play a dual role in the initiator identity of N-formylmethionyl-tRNA by promoting its recognition by IF2 and preventing the misappropriation of this tRNA by the elongation apparatus. The sequence is that of Methionyl-tRNA formyltransferase from Geotalea uraniireducens (strain Rf4) (Geobacter uraniireducens).